Consider the following 177-residue polypeptide: Large ribosomal subunit protein uL6 (177 aa).

Belongs to the universal ribosomal protein uL6 family. As to quaternary structure, part of the 50S ribosomal subunit.

Functionally, this protein binds to the 23S rRNA, and is important in its secondary structure. It is located near the subunit interface in the base of the L7/L12 stalk, and near the tRNA binding site of the peptidyltransferase center. In Nitrobacter winogradskyi (strain ATCC 25391 / DSM 10237 / CIP 104748 / NCIMB 11846 / Nb-255), this protein is Large ribosomal subunit protein uL6.